A 310-amino-acid chain; its full sequence is Manganese ABC transporter substrate-binding lipoprotein scaA (310 aa).

A signal peptide spans 1–19 (MKKCRFLVLLLLAFVGLAA). Cysteine 20 carries N-palmitoyl cysteine lipidation. A lipid anchor (S-diacylglycerol cysteine) is attached at cysteine 20. Residues histidine 68, histidine 140, glutamate 206, and aspartate 281 each coordinate Mn(2+).

This sequence belongs to the bacterial solute-binding protein 9 family. Lipoprotein receptor antigen (Lrai) subfamily. The complex is composed of two ATP-binding proteins (ScaC), two transmembrane proteins (ScaB) and a solute-binding protein (ScaA).

The protein localises to the cell membrane. Its function is as follows. Part of ATP-binding cassette (ABC) transport system ScaABC involved in manganese import. Essential for growth under Mn(2+)-limiting conditions. Also acts as an adhesin which is involved on adherence to extracellular matrix. It is an important factor in pathogenesis and infection. The chain is Manganese ABC transporter substrate-binding lipoprotein scaA from Streptococcus gordonii.